The primary structure comprises 128 residues: Glycine cleavage system H protein (128 aa).

The region spanning 22-104 is the Lipoyl-binding domain; that stretch reads TVLVGITDYA…YGEGWIFRLK (83 aa). Lys-63 is subject to N6-lipoyllysine.

This sequence belongs to the GcvH family. As to quaternary structure, the glycine cleavage system is composed of four proteins: P, T, L and H. Requires (R)-lipoate as cofactor.

In terms of biological role, the glycine cleavage system catalyzes the degradation of glycine. The H protein shuttles the methylamine group of glycine from the P protein to the T protein. The sequence is that of Glycine cleavage system H protein from Thermus thermophilus (strain ATCC BAA-163 / DSM 7039 / HB27).